We begin with the raw amino-acid sequence, 435 residues long: Hyaluronidase-1 (435 aa).

An N-terminal signal peptide occupies residues 1 to 21; the sequence is MAAHLLPICTLFLNLLSVAQG. 2 cysteine pairs are disulfide-bonded: cysteine 43-cysteine 333 and cysteine 207-cysteine 221. N-linked (GlcNAc...) asparagine glycans are attached at residues asparagine 70, asparagine 99, asparagine 107, and asparagine 121. Glutamate 131 functions as the Proton donor in the catalytic mechanism. Asparagine 216, asparagine 256, and asparagine 350 each carry an N-linked (GlcNAc...) asparagine glycan. Intrachain disulfides connect cysteine 358/cysteine 369, cysteine 363/cysteine 418, and cysteine 420/cysteine 429. Residues 418-429 form the EGF-like domain; the sequence is CRCYPGWRGTWC.

This sequence belongs to the glycosyl hydrolase 56 family. As to expression, highly expressed in spleen, kidney, and lung.

It localises to the secreted. It is found in the lysosome. It carries out the reaction Random hydrolysis of (1-&gt;4)-linkages between N-acetyl-beta-D-glucosamine and D-glucuronate residues in hyaluronate.. Its function is as follows. May have a role in promoting tumor progression. May block the TGFB1-enhanced cell growth. The protein is Hyaluronidase-1 (HYAL1) of Sus scrofa (Pig).